Here is a 145-residue protein sequence, read N- to C-terminus: Large ribosomal subunit protein uL13 (145 aa).

The protein belongs to the universal ribosomal protein uL13 family. As to quaternary structure, part of the 50S ribosomal subunit.

In terms of biological role, this protein is one of the early assembly proteins of the 50S ribosomal subunit, although it is not seen to bind rRNA by itself. It is important during the early stages of 50S assembly. In Brevibacillus brevis (strain 47 / JCM 6285 / NBRC 100599), this protein is Large ribosomal subunit protein uL13.